The primary structure comprises 360 residues: D-alanine--D-alanine ligase (360 aa).

The ATP-grasp domain maps to 139 to 344; it reads KDVFAQAGLA…YPELIEKLVS (206 aa). An ATP-binding site is contributed by 172 to 227; that stretch reads EQVLGYPCFVKPANMGSSVGISKCRSKEELQTAFDLAFQYDRRVVVEEGVVGREIE. Residues Asp298, Glu311, and Asn313 each contribute to the Mg(2+) site.

It belongs to the D-alanine--D-alanine ligase family. The cofactor is Mg(2+). It depends on Mn(2+) as a cofactor.

The protein localises to the cytoplasm. The enzyme catalyses 2 D-alanine + ATP = D-alanyl-D-alanine + ADP + phosphate + H(+). It functions in the pathway cell wall biogenesis; peptidoglycan biosynthesis. In terms of biological role, cell wall formation. The polypeptide is D-alanine--D-alanine ligase (Bacillus pumilus (strain SAFR-032)).